A 459-amino-acid chain; its full sequence is tRNA modification GTPase MnmE (459 aa).

Residues Arg-23, Glu-86, and Arg-125 each coordinate (6S)-5-formyl-5,6,7,8-tetrahydrofolate. A TrmE-type G domain is found at Gly-221–Tyr-380. Residue Asn-231 coordinates K(+). GTP is bound by residues Asn-231–Ser-236, Thr-250–Thr-256, and Asp-275–Gly-278. Ser-235 provides a ligand contact to Mg(2+). The K(+) site is built by Thr-250, Ile-252, and Thr-255. Thr-256 is a Mg(2+) binding site. A (6S)-5-formyl-5,6,7,8-tetrahydrofolate-binding site is contributed by Lys-459.

The protein belongs to the TRAFAC class TrmE-Era-EngA-EngB-Septin-like GTPase superfamily. TrmE GTPase family. Homodimer. Heterotetramer of two MnmE and two MnmG subunits. K(+) is required as a cofactor.

The protein resides in the cytoplasm. Exhibits a very high intrinsic GTPase hydrolysis rate. Involved in the addition of a carboxymethylaminomethyl (cmnm) group at the wobble position (U34) of certain tRNAs, forming tRNA-cmnm(5)s(2)U34. This is tRNA modification GTPase MnmE from Clostridioides difficile (strain 630) (Peptoclostridium difficile).